A 474-amino-acid chain; its full sequence is ATP synthase subunit beta 2 (474 aa).

An ATP-binding site is contributed by 151–158 (GGAGVGKT).

The protein belongs to the ATPase alpha/beta chains family. In terms of assembly, F-type ATPases have 2 components, CF(1) - the catalytic core - and CF(0) - the membrane proton channel. CF(1) has five subunits: alpha(3), beta(3), gamma(1), delta(1), epsilon(1). CF(0) has four main subunits: a(1), b(1), b'(1) and c(9-12).

It localises to the cell inner membrane. It carries out the reaction ATP + H2O + 4 H(+)(in) = ADP + phosphate + 5 H(+)(out). Its function is as follows. Produces ATP from ADP in the presence of a proton gradient across the membrane. The catalytic sites are hosted primarily by the beta subunits. The sequence is that of ATP synthase subunit beta 2 from Dinoroseobacter shibae (strain DSM 16493 / NCIMB 14021 / DFL 12).